Reading from the N-terminus, the 417-residue chain is Serine hydroxymethyltransferase 3 (417 aa).

(6S)-5,6,7,8-tetrahydrofolate contacts are provided by residues Leu121 and 125–127 (GHL). Lys230 carries the N6-(pyridoxal phosphate)lysine modification. Position 355-357 (355-357 (SPF)) interacts with (6S)-5,6,7,8-tetrahydrofolate.

It belongs to the SHMT family. As to quaternary structure, homodimer. Pyridoxal 5'-phosphate serves as cofactor.

Its subcellular location is the cytoplasm. It catalyses the reaction (6R)-5,10-methylene-5,6,7,8-tetrahydrofolate + glycine + H2O = (6S)-5,6,7,8-tetrahydrofolate + L-serine. The protein operates within one-carbon metabolism; tetrahydrofolate interconversion. It participates in amino-acid biosynthesis; glycine biosynthesis; glycine from L-serine: step 1/1. In terms of biological role, catalyzes the reversible interconversion of serine and glycine with tetrahydrofolate (THF) serving as the one-carbon carrier. This reaction serves as the major source of one-carbon groups required for the biosynthesis of purines, thymidylate, methionine, and other important biomolecules. Also exhibits THF-independent aldolase activity toward beta-hydroxyamino acids, producing glycine and aldehydes, via a retro-aldol mechanism. The protein is Serine hydroxymethyltransferase 3 of Pseudomonas fluorescens (strain Pf0-1).